The following is a 365-amino-acid chain: MDFGALPPEINSGRMYCGPGSGPMLAAAAAWDGVAVELGLAATGYASVIAELTGAPWVGAASLSMVAAATPYVAWLSQAAARAEQAGMQAAAAAAAYEAAFVMTVPPPVITANRVLVMTLIATNFFGQNSAAIAVAEAQYAEMWAQDAVAMYGYAAASASASRLIPFAAPPKTTNSAGVVAQVAAVAAMPGLLQRLSSAASVSWSNPNDWWLVRLLGSITPTERTTIVRLLGQSYFATGMAQFFASIAQQLTFGPGGTTAGSGGAWYPTPQFAGLGASRAVSASLARANKIGALSVPPSWVKTTALTESPVAHAVSANPTVGSSHGPHGLLRGLPLGSRITRRSGAFAHRYGFRHSVVARPPSAG.

The protein belongs to the mycobacterial PPE family.

This is an uncharacterized protein from Mycobacterium tuberculosis (strain ATCC 25618 / H37Rv).